The sequence spans 351 residues: L-threonine 3-dehydrogenase (351 aa).

Cysteine 39 lines the Zn(2+) pocket. Active-site charge relay system residues include threonine 41 and histidine 44. Zn(2+) contacts are provided by histidine 64, glutamate 65, cysteine 94, cysteine 97, cysteine 100, and cysteine 108. Residues isoleucine 176, aspartate 196, arginine 201, 271–273, and 295–296 each bind NAD(+); these read LGI and IY.

It belongs to the zinc-containing alcohol dehydrogenase family. Homotetramer. Zn(2+) serves as cofactor.

The protein resides in the cytoplasm. The catalysed reaction is L-threonine + NAD(+) = (2S)-2-amino-3-oxobutanoate + NADH + H(+). Its pathway is amino-acid degradation; L-threonine degradation via oxydo-reductase pathway; glycine from L-threonine: step 1/2. In terms of biological role, catalyzes the NAD(+)-dependent oxidation of L-threonine to 2-amino-3-ketobutyrate. The sequence is that of L-threonine 3-dehydrogenase from Francisella philomiragia subsp. philomiragia (strain ATCC 25017 / CCUG 19701 / FSC 153 / O#319-036).